A 379-amino-acid polypeptide reads, in one-letter code: UDP-4-amino-4-deoxy-L-arabinose--oxoglutarate aminotransferase (379 aa).

Position 182 is an N6-(pyridoxal phosphate)lysine (Lys-182).

The protein belongs to the DegT/DnrJ/EryC1 family. ArnB subfamily. In terms of assembly, homodimer. Pyridoxal 5'-phosphate serves as cofactor.

The catalysed reaction is UDP-4-amino-4-deoxy-beta-L-arabinose + 2-oxoglutarate = UDP-beta-L-threo-pentopyranos-4-ulose + L-glutamate. It functions in the pathway nucleotide-sugar biosynthesis; UDP-4-deoxy-4-formamido-beta-L-arabinose biosynthesis; UDP-4-deoxy-4-formamido-beta-L-arabinose from UDP-alpha-D-glucuronate: step 2/3. The protein operates within bacterial outer membrane biogenesis; lipopolysaccharide biosynthesis. Functionally, catalyzes the conversion of UDP-4-keto-arabinose (UDP-Ara4O) to UDP-4-amino-4-deoxy-L-arabinose (UDP-L-Ara4N). The modified arabinose is attached to lipid A and is required for resistance to polymyxin and cationic antimicrobial peptides. This is UDP-4-amino-4-deoxy-L-arabinose--oxoglutarate aminotransferase from Salmonella agona (strain SL483).